The following is a 141-amino-acid chain: Putative ankyrin repeat protein FPV223 (141 aa).

ANK repeat units lie at residues 21–50 (SGRT…DVFK), 54–83 (CMCT…YIVK), 85–114 (RNKL…NENS), and 118–140 (DGLT…MFVI).

The chain is Putative ankyrin repeat protein FPV223 from Vertebrata (FPV).